A 766-amino-acid chain; its full sequence is Phosphoribosylformylglycinamidine synthase subunit PurL (766 aa).

His-66 is an active-site residue. 2 residues coordinate ATP: Tyr-69 and Lys-113. Residue Glu-115 coordinates Mg(2+). Residues 116 to 119 (SHNH) and Arg-138 each bind substrate. His-117 functions as the Proton acceptor in the catalytic mechanism. Asp-139 is a Mg(2+) binding site. Substrate is bound at residue Gln-264. Asp-292 is a Mg(2+) binding site. 336–338 (ESQ) lines the substrate pocket. Residues Asn-524 and Gly-561 each contribute to the ATP site. Residue Asn-562 participates in Mg(2+) binding. Substrate is bound at residue Ser-564.

This sequence belongs to the FGAMS family. As to quaternary structure, monomer. Part of the FGAM synthase complex composed of 1 PurL, 1 PurQ and 2 PurS subunits.

Its subcellular location is the cytoplasm. It carries out the reaction N(2)-formyl-N(1)-(5-phospho-beta-D-ribosyl)glycinamide + L-glutamine + ATP + H2O = 2-formamido-N(1)-(5-O-phospho-beta-D-ribosyl)acetamidine + L-glutamate + ADP + phosphate + H(+). It participates in purine metabolism; IMP biosynthesis via de novo pathway; 5-amino-1-(5-phospho-D-ribosyl)imidazole from N(2)-formyl-N(1)-(5-phospho-D-ribosyl)glycinamide: step 1/2. In terms of biological role, part of the phosphoribosylformylglycinamidine synthase complex involved in the purines biosynthetic pathway. Catalyzes the ATP-dependent conversion of formylglycinamide ribonucleotide (FGAR) and glutamine to yield formylglycinamidine ribonucleotide (FGAM) and glutamate. The FGAM synthase complex is composed of three subunits. PurQ produces an ammonia molecule by converting glutamine to glutamate. PurL transfers the ammonia molecule to FGAR to form FGAM in an ATP-dependent manner. PurS interacts with PurQ and PurL and is thought to assist in the transfer of the ammonia molecule from PurQ to PurL. This is Phosphoribosylformylglycinamidine synthase subunit PurL from Mycobacterium bovis (strain BCG / Pasteur 1173P2).